A 777-amino-acid chain; its full sequence is Shutoff protein (777 aa).

Disordered regions lie at residues 1 to 55 (MEED…SVPV) and 261 to 283 (PLDSDQPEQNSEDGQPVVSDDDL). The span at 9–20 (QPDSETLTSPTS) shows a compositional bias: polar residues. The binding to host EIF4G stretch occupies residues 250–314 (VMDHLLIKRV…VILVTVELEC (65 aa)). The RRM domain occupies 317–435 (RFFANPQTLR…ELWTAFSERT (119 aa)). 2 positions are modified to phosphotyrosine; by host: Y334 and Y649. Residues 652 to 777 (PQTGEELNTP…AAARLVESQP (126 aa)) are disordered. Residues 656 to 665 (EELNTPSPSA) show a composition bias toward polar residues. Residues 728–738 (GAGGQTPQGRG) show a composition bias toward gly residues. Positions 753 to 763 (TRSEPASDGES) are enriched in basic and acidic residues.

Belongs to the adenoviridae shutoff protein family. Monomer. Interacts with hexon protein; this interaction allows chaperoning and trimerization of hexon proteins. Interacts (via N-terminus) with host initiation factor EIF4G (via C-terminus). Interacts (via RRM domain) with viral mRNAs that contain the tripartite leader; this interaction allows ribosome shunting and expression of viral late mRNAs. Post-translationally, might be cleaved by the viral protease. Phosphorylated. Tyrosine phosphorylation enhances preferential binding to tripartite leader mRNAs and allows ribosome shunting. In terms of processing, methylated. Asymmetric dimethylation by host PRMT1 of the Arg/Gly-rich region may regulate shutoff protein binding to hexon and promote the capsid assembly in the nucleus.

Its subcellular location is the host cytoplasm. Protein that inhibits host translation while promoting late viral translation by ribosome shunting. Blocks host cap-dependent translation by binding to eIF4G, displacing MKNK1 from cap initiation complexes and preventing EIF4E phosphorylation. Binds to the tripartite leader sequence of viral late mRNAs and recruits host eIF4G, PABPC1/poly-A binding protein and 40S ribosomes subunits on viral mRNAs, allowing ribosome shunting and efficient translation of late viral mRNAs even though conventional translation via ribosome scanning from the cap has been shut off in the host cell. During assembly, acts as a chaperone protein that helps hexon proteins assembly into trimers. This Homo sapiens (Human) protein is Shutoff protein.